Reading from the N-terminus, the 200-residue chain is Small ribosomal subunit protein uS4 (200 aa).

Residues Thr-22–Lys-43 are disordered. The region spanning Gln-92–Glu-170 is the S4 RNA-binding domain.

The protein belongs to the universal ribosomal protein uS4 family. As to quaternary structure, part of the 30S ribosomal subunit. Contacts protein S5. The interaction surface between S4 and S5 is involved in control of translational fidelity.

Its function is as follows. One of the primary rRNA binding proteins, it binds directly to 16S rRNA where it nucleates assembly of the body of the 30S subunit. Functionally, with S5 and S12 plays an important role in translational accuracy. This Listeria monocytogenes serovar 1/2a (strain ATCC BAA-679 / EGD-e) protein is Small ribosomal subunit protein uS4.